Here is a 75-residue protein sequence, read N- to C-terminus: uncharacterized protein (75 aa).

Positions 1-26 are cleaved as a signal peptide; the sequence is MQFLERHFSVLFPVLFFFSFYPISFA.

The protein resides in the secreted. This is an uncharacterized protein from Schizosaccharomyces pombe (strain 972 / ATCC 24843) (Fission yeast).